Consider the following 279-residue polypeptide: 3-methyl-2-oxobutanoate hydroxymethyltransferase (279 aa).

Residues Asp43 and Asp82 each coordinate Mg(2+). 3-methyl-2-oxobutanoate is bound by residues Asp43–Ser44, Asp82, and Lys112. Glu114 contributes to the Mg(2+) binding site. Residue Glu181 is the Proton acceptor of the active site.

This sequence belongs to the PanB family. As to quaternary structure, homodecamer; pentamer of dimers. Requires Mg(2+) as cofactor.

The protein localises to the cytoplasm. It carries out the reaction 3-methyl-2-oxobutanoate + (6R)-5,10-methylene-5,6,7,8-tetrahydrofolate + H2O = 2-dehydropantoate + (6S)-5,6,7,8-tetrahydrofolate. It functions in the pathway cofactor biosynthesis; (R)-pantothenate biosynthesis; (R)-pantoate from 3-methyl-2-oxobutanoate: step 1/2. In terms of biological role, catalyzes the reversible reaction in which hydroxymethyl group from 5,10-methylenetetrahydrofolate is transferred onto alpha-ketoisovalerate to form ketopantoate. The sequence is that of 3-methyl-2-oxobutanoate hydroxymethyltransferase from Geobacillus sp. (strain WCH70).